Consider the following 1022-residue polypeptide: Protein translocase subunit SecA (1022 aa).

Residues glutamine 143, glycine 161–threonine 165, and aspartate 661 each bind ATP. Residues alanine 973 to arginine 1001 are disordered. Zn(2+) is bound by residues cysteine 1005, cysteine 1007, cysteine 1016, and histidine 1017.

The protein belongs to the SecA family. As to quaternary structure, monomer and homodimer. Part of the essential Sec protein translocation apparatus which comprises SecA, SecYEG and auxiliary proteins SecDF. Other proteins may also be involved. Zn(2+) is required as a cofactor.

It is found in the cell inner membrane. Its subcellular location is the cytoplasm. The catalysed reaction is ATP + H2O + cellular proteinSide 1 = ADP + phosphate + cellular proteinSide 2.. Its function is as follows. Part of the Sec protein translocase complex. Interacts with the SecYEG preprotein conducting channel. Has a central role in coupling the hydrolysis of ATP to the transfer of proteins into and across the cell membrane, serving as an ATP-driven molecular motor driving the stepwise translocation of polypeptide chains across the membrane. This chain is Protein translocase subunit SecA, found in Chlorobium phaeobacteroides (strain DSM 266 / SMG 266 / 2430).